Here is a 354-residue protein sequence, read N- to C-terminus: MEHFDVAIIGLGPAGSALARKLAGKMQVIALDKKHQCGTEGFSKPCGGLLAPDAQRSFIRDGLTLPVDVIANPQIFSVKTVDVAASLTRNYQRSYININRHAFDLWMKSLIPASVEVYHDSLCRKIWREDDKWHVIFRADGWEQHITARYLVGADGANSMVRRHLYPDHQIRKYVAIQQWFAEKHPVPFYSCIFDNSITNCYSWSISKDGYFIFGGAYPMKDGQTRFTTLKEKMSAFQFQFGKTVKSEKCTVLFPSRWQDFVCGKDNAFLIGEAAGFISASSLEGISYALDSTDILRSVLLKQPEKLNTAYWRATRKLRLKLFGKIVKSRCLTAPALRKWIMRSGVAHIPQLKD.

This sequence belongs to the CbrA family.

This is Protein CbrA (cbrA) from Escherichia coli (strain K12).